Consider the following 151-residue polypeptide: Glycine and methionine-rich protein (151 aa).

Positions 1-19 are cleaved as a signal peptide; the sequence is MKTAVVLAAFSALMALARA.

As to expression, component of the acid-insoluble and acid-soluble organic matrix of calcified layers of the shell (at protein level).

It is found in the secreted. The protein is Glycine and methionine-rich protein of Lottia gigantea (Giant owl limpet).